We begin with the raw amino-acid sequence, 300 residues long: B1 kinase (300 aa).

The Protein kinase domain occupies 16 to 282 (WVVGPLIGKG…ITMVNSLTYF (267 aa)). Residues 22 to 30 (IGKGGFGSI) and Lys-45 each bind ATP. Asp-147 serves as the catalytic Proton acceptor.

It belongs to the protein kinase superfamily. Ser/Thr protein kinase family. Poxviruses subfamily. In terms of assembly, interacts with host JIP1; this interaction increases the amount of MAPK bound to JIP1 and subsequently increases the activity of transcription factors, such as JUN, that respond to these complexes. Interacts with protein OPG198; this interaction inhibits the repressive activity of OPG198 pseudokinase on viral replication factory formation. Requires Mg(2+) as cofactor. Autophosphorylated.

It localises to the virion. It is found in the host cytoplasm. The catalysed reaction is L-seryl-[protein] + ATP = O-phospho-L-seryl-[protein] + ADP + H(+). It carries out the reaction L-threonyl-[protein] + ATP = O-phospho-L-threonyl-[protein] + ADP + H(+). Its function is as follows. Essential serine/threonine-protein kinase that plays different role in the viral life cycle. Phosphorylates the host small ribosomal protein RACK1 thereby customizing the ribosomes to a state optimal for viral mRNAs (which contain poly-A leaders) but not for host mRNAs. Facilitates viral DNA replication by inhibiting host BANF1, a cellular host defense responsive to foreign DNA. Phosphorylates host BANF1 on serine and threonine residues; this leads to BANF1 relocalization to the cytoplasm, loss of dimerization and impaired DNA binding activity. Indeed, BANF1 activity depends on its DNA-binding property which is blocked by VPK1-mediated phosphorylation. Required for viral intermediate genes expression, probably by inhibiting host BANF1. Modulates cellular responses via host JUN by two different mechanisms, either by direct phosphorylation or by modulation of upstream JIP1-MAPK complexes. Seems to participate in the accumulation/processing of late proteins and thus in virion maturation. In addition, inhibits B12 repressive activity on viral DNA replication via a phosphorylation-dependent mechanism. The chain is B1 kinase (OPG187) from Homo sapiens (Human).